Here is a 125-residue protein sequence, read N- to C-terminus: Protein ApaG (125 aa).

In terms of domain architecture, ApaG spans 1-125 (MFTSSKVAIQ…FRLAIPTLIN (125 aa)).

In Proteus mirabilis (strain HI4320), this protein is Protein ApaG.